A 651-amino-acid polypeptide reads, in one-letter code: p-hydroxybenzoic acid efflux pump subunit AaeB (651 aa).

A run of 11 helical transmembrane segments spans residues 11–31 (FAFKLSFAIVAALFLGFHLQL), 41–61 (AAIVAAGPAFAAGGEPFSGAI), 67–87 (LRIIGTFIGCIGGLIIIVLTI), 91–111 (VLTLMLCCLWAGVCTWISSLV), 119–139 (FGLAGYTALIIIVTTGETPLL), 150–170 (EIVLGIVCAVMADLLFSPRSI), 368–388 (LFWLWTGWTSGAGCMVMIAVV), 405–425 (FLLGVIMALPIGALYFMFIIP), 429–449 (QSMLLLCISLGLLAFIIGIEV), 460–480 (LASTINIMVLSNPMEFNVSLF), and 481–501 (LDSALGQIVGCFVSLIVLLLI).

The protein belongs to the aromatic acid exporter ArAE (TC 2.A.85) family.

The protein localises to the cell inner membrane. In terms of biological role, forms an efflux pump with AaeA. Could function as a metabolic relief valve, allowing to eliminate certain compounds when they accumulate to high levels in the cell. In Yersinia enterocolitica serotype O:8 / biotype 1B (strain NCTC 13174 / 8081), this protein is p-hydroxybenzoic acid efflux pump subunit AaeB.